The sequence spans 701 residues: Ribosomal RNA large subunit methyltransferase K/L (701 aa).

In terms of domain architecture, THUMP spans leucine 43–leucine 154.

This sequence belongs to the methyltransferase superfamily. RlmKL family.

The protein resides in the cytoplasm. The catalysed reaction is guanosine(2445) in 23S rRNA + S-adenosyl-L-methionine = N(2)-methylguanosine(2445) in 23S rRNA + S-adenosyl-L-homocysteine + H(+). It catalyses the reaction guanosine(2069) in 23S rRNA + S-adenosyl-L-methionine = N(2)-methylguanosine(2069) in 23S rRNA + S-adenosyl-L-homocysteine + H(+). Functionally, specifically methylates the guanine in position 2445 (m2G2445) and the guanine in position 2069 (m7G2069) of 23S rRNA. This is Ribosomal RNA large subunit methyltransferase K/L from Klebsiella pneumoniae subsp. pneumoniae (strain ATCC 700721 / MGH 78578).